A 149-amino-acid polypeptide reads, in one-letter code: Large ribosomal subunit protein bL9 (149 aa).

It belongs to the bacterial ribosomal protein bL9 family.

Binds to the 23S rRNA. This Geobacillus kaustophilus (strain HTA426) protein is Large ribosomal subunit protein bL9.